The sequence spans 1028 residues: Contactin-6 (1028 aa).

The signal sequence occupies residues 1–19; that stretch reads MRLLWKLVILLPLINSCAG. Ig-like C2-type domains follow at residues 32–117, 122–208, 227–308, 318–402, 408–495, and 499–587; these read PQDV…AKLQ, EDFE…RSVQ, PKIE…RNLA, PEWE…AELR, PDFS…GSLI, and RTVI…ERLS. 6 disulfides stabilise this stretch: cysteine 50-cysteine 100, cysteine 144-cysteine 196, cysteine 249-cysteine 297, cysteine 339-cysteine 386, cysteine 431-cysteine 479, and cysteine 521-cysteine 577. N-linked (GlcNAc...) asparagine glycans are attached at residues asparagine 65 and asparagine 193. 3 N-linked (GlcNAc...) asparagine glycosylation sites follow: asparagine 368, asparagine 377, and asparagine 468. 4 Fibronectin type-III domains span residues 600–698, 703–800, 805–901, and 902–996; these read PPED…TKAS, APVN…SGED, APRG…TKKS, and PPSQ…KMSS. N-linked (GlcNAc...) asparagine glycans are attached at residues asparagine 659, asparagine 765, asparagine 860, and asparagine 865. Tyrosine 882 is subject to Phosphotyrosine. A compositionally biased stretch (polar residues) spans 887-902; it reads TGPSSPPVNVTTKKSP. A disordered region spans residues 887 to 908; that stretch reads TGPSSPPVNVTTKKSPPSQPPA. Asparagine 895, asparagine 931, asparagine 956, and asparagine 957 each carry an N-linked (GlcNAc...) asparagine glycan. Serine 999 carries GPI-anchor amidated serine lipidation. A propeptide spans 1000 to 1028 (removed in mature form); that stretch reads VGVQILKPSTQFLTMVGFFYCFVIQPLSR.

This sequence belongs to the immunoglobulin superfamily. Contactin family. Interacts with PTPRG. In terms of tissue distribution, specifically expressed in neuronal cells. In brain, it is expressed in spinal cord, cerebrum and cerebellum. At 17 dpc, it is expressed in hippocampus, cerebellum, and the brain stem. Strongly expressed after birth with a maximum level between P1 and P21, which corresponds to the time frame of oligodendrogliogenesis.

The protein resides in the cell membrane. Contactins mediate cell surface interactions during nervous system development. Participates in oligodendrocytes generation by acting as a ligand of NOTCH1. Its association with NOTCH1 promotes NOTCH1 activation through the released notch intracellular domain (NICD) and subsequent translocation to the nucleus. May be involved in motor coordination. This chain is Contactin-6 (Cntn6), found in Rattus norvegicus (Rat).